The following is a 264-amino-acid chain: Small ribosomal subunit protein uS3 (264 aa).

Residues 39–107 (VREYLKKKLK…PVHVNIEEIR (69 aa)) enclose the KH type-2 domain. Residues 217-264 (EEVAEEKRPRRNARPGDRRPRRDGEGAPAGARRGAPRRGGAGDGKTGE) form a disordered region. Over residues 230–241 (RPGDRRPRRDGE) the composition is skewed to basic and acidic residues. Residues 253 to 264 (RRGGAGDGKTGE) are compositionally biased toward gly residues.

It belongs to the universal ribosomal protein uS3 family. In terms of assembly, part of the 30S ribosomal subunit. Forms a tight complex with proteins S10 and S14.

In terms of biological role, binds the lower part of the 30S subunit head. Binds mRNA in the 70S ribosome, positioning it for translation. The polypeptide is Small ribosomal subunit protein uS3 (Paraburkholderia phymatum (strain DSM 17167 / CIP 108236 / LMG 21445 / STM815) (Burkholderia phymatum)).